A 501-amino-acid polypeptide reads, in one-letter code: 2-phosphoxylose phosphatase 1 (501 aa).

Over 1–6 (MLLRNR) the chain is Cytoplasmic. A helical; Signal-anchor for type II membrane protein transmembrane segment spans residues 7–27 (FLLLLALAGLLAFLSLSLQFF). The Lumenal portion of the chain corresponds to 28–501 (SRWLPVSLQL…YYDACHQRLF (474 aa)). His120 (nucleophile) is an active-site residue. 2 N-linked (GlcNAc...) asparagine glycosylation sites follow: Asn328 and Asn377. The Proton donor role is filled by Asp402. N-linked (GlcNAc...) asparagine glycosylation occurs at Asn488.

It belongs to the histidine acid phosphatase family.

The protein localises to the golgi apparatus membrane. The enzyme catalyses 3-O-[beta-D-GlcA-(1-&gt;3)-beta-D-Gal-(1-&gt;3)-beta-D-Gal-(1-&gt;4)-beta-D-2-O-P-Xyl]-L-seryl-[protein] + H2O = 3-O-(beta-D-GlcA-(1-&gt;3)-beta-D-Gal-(1-&gt;3)-beta-D-Gal-(1-&gt;4)-beta-D-Xyl)-L-seryl-[protein] + phosphate. In terms of biological role, responsible for the 2-O-dephosphorylation of xylose in the glycosaminoglycan-protein linkage region of proteoglycans thereby regulating the amount of mature glycosaminoglycan (GAG) chains. Sulfated glycosaminoglycans (GAGs), including heparan sulfate and chondroitin sulfate, are synthesized on the so-called common GAG-protein linkage region (GlcUAbeta1-3Galbeta1-3Galbeta1-4Xylbeta1-O-Ser) of core proteins, which is formed by the stepwise addition of monosaccharide residues by the respective specific glycosyltransferases. Xylose 2-O-dephosphorylation during completion of linkage region formation is a prerequisite for the initiation and efficient elongation of the repeating disaccharide region of GAG chains. The polypeptide is 2-phosphoxylose phosphatase 1 (Xenopus tropicalis (Western clawed frog)).